The following is a 479-amino-acid chain: Anaerobic nitric oxide reductase flavorubredoxin (479 aa).

The tract at residues 30–210 is zinc metallo-hydrolase; it reads LRGSSYNSYL…PFSRLVTPKI (181 aa). Fe cation-binding residues include H79, E81, D83, H147, D166, and H227. Residues 254–393 form the Flavodoxin-like domain; that stretch reads ITIFYDTMSN…LCREHGREIA (140 aa). Residues 260-264 and 342-369 contribute to the FMN site; these read TMSNN and AFGS…EMSL. Residues 423–474 enclose the Rubredoxin-like domain; it reads GPRMQCSVCQWIYDPAKGEPMQDVAPGTPWSEVPDNFLCPECSLGKDVFEEL. Positions 428, 431, 461, and 464 each coordinate Fe cation.

The protein in the N-terminal section; belongs to the zinc metallo-hydrolase group 3 family. Homotetramer. Fe cation serves as cofactor. It depends on FMN as a cofactor.

Its subcellular location is the cytoplasm. It functions in the pathway nitrogen metabolism; nitric oxide reduction. Functionally, anaerobic nitric oxide reductase; uses NADH to detoxify nitric oxide (NO), protecting several 4Fe-4S NO-sensitive enzymes. Has at least 2 reductase partners, only one of which (NorW, flavorubredoxin reductase) has been identified. NO probably binds to the di-iron center; electrons enter from the NorW at rubredoxin and are transferred sequentially to the FMN center and the di-iron center. Also able to function as an aerobic oxygen reductase. The chain is Anaerobic nitric oxide reductase flavorubredoxin from Shigella boydii serotype 4 (strain Sb227).